Consider the following 233-residue polypeptide: Small ribosomal subunit protein uS3 (233 aa).

The KH type-2 domain occupies 39-108 (IRTALFKLLK…KLIVNVRVIE (70 aa)).

It belongs to the universal ribosomal protein uS3 family. Part of the 30S ribosomal subunit. Forms a tight complex with proteins S10 and S14.

Functionally, binds the lower part of the 30S subunit head. Binds mRNA in the 70S ribosome, positioning it for translation. The chain is Small ribosomal subunit protein uS3 from Mycoplasma mycoides subsp. mycoides SC (strain CCUG 32753 / NCTC 10114 / PG1).